We begin with the raw amino-acid sequence, 481 residues long: ATP synthase subunit beta, chloroplastic (481 aa).

161–168 contributes to the ATP binding site; it reads GGAGVGKT.

This sequence belongs to the ATPase alpha/beta chains family. F-type ATPases have 2 components, CF(1) - the catalytic core - and CF(0) - the membrane proton channel. CF(1) has five subunits: alpha(3), beta(3), gamma(1), delta(1), epsilon(1). CF(0) has four main subunits: a(1), b(1), b'(1) and c(9-12).

Its subcellular location is the plastid. It is found in the chloroplast thylakoid membrane. The catalysed reaction is ATP + H2O + 4 H(+)(in) = ADP + phosphate + 5 H(+)(out). In terms of biological role, produces ATP from ADP in the presence of a proton gradient across the membrane. The catalytic sites are hosted primarily by the beta subunits. The sequence is that of ATP synthase subunit beta, chloroplastic from Pylaiella littoralis (Seaweed).